Reading from the N-terminus, the 705-residue chain is Translation initiation factor IF-2 (705 aa).

The disordered stretch occupies residues 40–124 (DDQIKALDKK…QPAAPKEIPS (85 aa)). Residues 41 to 58 (DQIKALDKKFKKEQKNDN) are compositionally biased toward basic and acidic residues. The span at 59–77 (KQSTQNNHQKSNNQNQNKG) shows a compositional bias: low complexity. Residues 94–108 (KGNKKNNRNNKKNNK) are compositionally biased toward basic residues. The region spanning 207–376 (ERPAVVTIMG…GLVAEVQELK (170 aa)) is the tr-type G domain. The G1 stretch occupies residues 216 to 223 (GHVDHGKT). 216–223 (GHVDHGKT) is a binding site for GTP. The segment at 241 to 245 (GITQH) is G2. Residues 262-265 (DTPG) form a G3 region. Residues 262-266 (DTPGH) and 316-319 (NKID) each bind GTP. Positions 316 to 319 (NKID) are G4. Residues 352 to 354 (SAL) are G5.

This sequence belongs to the TRAFAC class translation factor GTPase superfamily. Classic translation factor GTPase family. IF-2 subfamily.

The protein resides in the cytoplasm. Functionally, one of the essential components for the initiation of protein synthesis. Protects formylmethionyl-tRNA from spontaneous hydrolysis and promotes its binding to the 30S ribosomal subunits. Also involved in the hydrolysis of GTP during the formation of the 70S ribosomal complex. The protein is Translation initiation factor IF-2 of Staphylococcus aureus (strain MRSA252).